The chain runs to 442 residues: QWRF motif-containing protein 6 (442 aa).

2 disordered regions span residues 1-144 (MEAK…LSQQ) and 221-240 (FSRLGLPLPPMAPKVPADTK). Basic residues predominate over residues 57 to 66 (KQHHLQHHQI). Basic and acidic residues predominate over residues 80–89 (KMADGDENRS). The QWRF motif motif lies at 264–267 (QWRF).

It belongs to the QWRF family.

This is QWRF motif-containing protein 6 (QWRF6) from Arabidopsis thaliana (Mouse-ear cress).